Reading from the N-terminus, the 431-residue chain is Chaperone SurA (431 aa).

Residues 1–22 (MKLWKPTLISVLSALTLFNAHA) form the signal peptide. 2 PpiC domains span residues 173–271 (TVQY…KIDD) and 280–380 (VTEV…EVLD).

The protein localises to the periplasm. The catalysed reaction is [protein]-peptidylproline (omega=180) = [protein]-peptidylproline (omega=0). Functionally, chaperone involved in the correct folding and assembly of outer membrane proteins. Recognizes specific patterns of aromatic residues and the orientation of their side chains, which are found more frequently in integral outer membrane proteins. May act in both early periplasmic and late outer membrane-associated steps of protein maturation. This chain is Chaperone SurA, found in Vibrio cholerae serotype O1 (strain ATCC 39315 / El Tor Inaba N16961).